A 108-amino-acid chain; its full sequence is MNILLIILASLFSCAGQLCQKQATTVSGGRRPLLLWLGGSVLLLGMAMLVWLRVLQTVPVGVAYPMLSLNFIFVTLAARWLWRETLSLRHALGVILIVAGVAIMGSYT.

Helical transmembrane passes span 32 to 52 (PLLLWLGGSVLLLGMAMLVWL), 58 to 78 (VPVGVAYPMLSLNFIFVTLAA), and 85 to 105 (TLSLRHALGVILIVAGVAIMG). In terms of domain architecture, EamA spans 34-106 (LLWLGGSVLL…IVAGVAIMGS (73 aa)).

This sequence belongs to the ArnE family. As to quaternary structure, heterodimer of ArnE and ArnF.

Its subcellular location is the cell inner membrane. It functions in the pathway bacterial outer membrane biogenesis; lipopolysaccharide biosynthesis. Translocates 4-amino-4-deoxy-L-arabinose-phosphoundecaprenol (alpha-L-Ara4N-phosphoundecaprenol) from the cytoplasmic to the periplasmic side of the inner membrane. The chain is Probable 4-amino-4-deoxy-L-arabinose-phosphoundecaprenol flippase subunit ArnE from Erwinia tasmaniensis (strain DSM 17950 / CFBP 7177 / CIP 109463 / NCPPB 4357 / Et1/99).